A 152-amino-acid chain; its full sequence is MKKRLFVLSLILLVALDQLSKFWIVSHIALGEVKPFIPGIVSLTYLQNNGAAFSILQDQQWFFVVITVLVIGYAIYYLATHPHLNIWKQLALLLIISGGIGNFIDRLRLAYVIDMIHLDFMDFAIFNVADSYLTVGVILLVICLWKEEDYGN.

Helical transmembrane passes span 5-25 (LFVL…FWIV), 61-81 (WFFV…LATH), and 84-104 (LNIW…GNFI). Active-site residues include aspartate 114 and aspartate 130. The helical transmembrane segment at 125-145 (IFNVADSYLTVGVILLVICLW) threads the bilayer.

Belongs to the peptidase A8 family.

The protein resides in the cell membrane. It carries out the reaction Release of signal peptides from bacterial membrane prolipoproteins. Hydrolyzes -Xaa-Yaa-Zaa-|-(S,diacylglyceryl)Cys-, in which Xaa is hydrophobic (preferably Leu), and Yaa (Ala or Ser) and Zaa (Gly or Ala) have small, neutral side chains.. Its pathway is protein modification; lipoprotein biosynthesis (signal peptide cleavage). This protein specifically catalyzes the removal of signal peptides from prolipoproteins. The polypeptide is Lipoprotein signal peptidase (Streptococcus pyogenes serotype M2 (strain MGAS10270)).